The following is a 239-amino-acid chain: Probable transcriptional regulatory protein Tcr_1104 (239 aa).

It belongs to the TACO1 family.

The protein resides in the cytoplasm. In Hydrogenovibrio crunogenus (strain DSM 25203 / XCL-2) (Thiomicrospira crunogena), this protein is Probable transcriptional regulatory protein Tcr_1104.